An 84-amino-acid polypeptide reads, in one-letter code: Small ribosomal subunit protein uS17 (84 aa).

This sequence belongs to the universal ribosomal protein uS17 family. In terms of assembly, part of the 30S ribosomal subunit.

Functionally, one of the primary rRNA binding proteins, it binds specifically to the 5'-end of 16S ribosomal RNA. The sequence is that of Small ribosomal subunit protein uS17 from Aliivibrio salmonicida (strain LFI1238) (Vibrio salmonicida (strain LFI1238)).